Consider the following 493-residue polypeptide: MQFSFSNDLGTLFTIILAIGFIINLVLAFIIIFLERNRRTASSTWAWLFVLFVLPLIGFILYLFFGRTVSARKLNKNNGNVLTDFDGLLKQQIESFDKGNYGTDNKQVQKHHDLVRMLLMDQDGFLTENNKVDHFIDGNDLYDQVLKDIKNAKEYIHLEYYTFALDGLGKRILHALEEKLKQGLEVKILYDDVGSKNVKMANFDHFKSLGGEVEAFFASKLPLLNFRMNNRNHRKIIIIDGQLGYVGGFNIGDEYLGLGKLGYWRDTHLRIQGDAVDALQLRFILDWNSQAHRPQFEYDVKYFPKKNGPLGNSPIQIAASGPASDWHQIEYGYTKMIMSAKKSVYLQSPYFIPDNSYINAIKIAAKSGVDVHLMIPCKPDHPLVYWATFSNASDLLSSGVKIYTYENGFIHSKMCLIDDEIVSVGTANMDFRSFELNFEVNAFVYDENLAKDLRVAYEHDITKSKQLTEESYANRPLSVKFKESLAKLVSPIL.

Helical transmembrane passes span 13-33 (FTIILAIGFIINLVLAFIIIF) and 45-65 (WAWLFVLFVLPLIGFILYLFF). PLD phosphodiesterase domains follow at residues 228 to 255 (MNNRNHRKIIIIDGQLGYVGGFNIGDEY) and 406 to 433 (ENGFIHSKMCLIDDEIVSVGTANMDFRS). Catalysis depends on residues histidine 233, lysine 235, aspartate 240, histidine 411, lysine 413, and aspartate 418.

Belongs to the phospholipase D family. Cardiolipin synthase subfamily.

The protein localises to the cell membrane. The catalysed reaction is 2 a 1,2-diacyl-sn-glycero-3-phospho-(1'-sn-glycerol) = a cardiolipin + glycerol. Its function is as follows. Catalyzes the reversible phosphatidyl group transfer from one phosphatidylglycerol molecule to another to form cardiolipin (CL) (diphosphatidylglycerol) and glycerol. This Staphylococcus aureus (strain MRSA252) protein is Cardiolipin synthase 1 (cls1).